The sequence spans 830 residues: Periplasmic nitrate reductase (830 aa).

The segment at residues 1-31 is a signal peptide (tat-type signal); sequence MKLSRRDFMKANAAVAAAAAAGMTIPTVAKA. The 4Fe-4S Mo/W bis-MGD-type domain occupies 39-95; sequence IKWDKAPCRFCGTGCGVLVGTQNGRIVASQGDPDSPVNRGLNCIKGYFLPKIMYGKD. [4Fe-4S] cluster-binding residues include cysteine 46, cysteine 49, cysteine 53, and cysteine 81. Residues lysine 83, glutamine 150, asparagine 175, cysteine 179, 212-219, 243-247, 262-264, methionine 372, glutamine 376, asparagine 482, 508-509, lysine 531, aspartate 558, and 718-727 contribute to the Mo-bis(molybdopterin guanine dinucleotide) site; these read WGSNMAEM, STYEH, QTD, SD, and TGRVLEHWHT. Phenylalanine 794 provides a ligand contact to substrate. The Mo-bis(molybdopterin guanine dinucleotide) site is built by asparagine 802 and lysine 819.

This sequence belongs to the prokaryotic molybdopterin-containing oxidoreductase family. NasA/NapA/NarB subfamily. As to quaternary structure, component of the periplasmic nitrate reductase NapAB complex composed of NapA and NapB. [4Fe-4S] cluster is required as a cofactor. It depends on Mo-bis(molybdopterin guanine dinucleotide) as a cofactor. Predicted to be exported by the Tat system. The position of the signal peptide cleavage has not been experimentally proven.

Its subcellular location is the periplasm. It catalyses the reaction 2 Fe(II)-[cytochrome] + nitrate + 2 H(+) = 2 Fe(III)-[cytochrome] + nitrite + H2O. Its function is as follows. Catalytic subunit of the periplasmic nitrate reductase complex NapAB. Receives electrons from NapB and catalyzes the reduction of nitrate to nitrite. The protein is Periplasmic nitrate reductase of Yersinia pseudotuberculosis serotype IB (strain PB1/+).